The following is a 579-amino-acid chain: MGLLYALRVRIMNFMIFFLLIILMPGLPPRTTFPFKDYIVTPPKDLKGALESNFHLEGAERLLEGRVYGPECLIARNNEIYTGIHGGEVIKLTSNHVTHVTKIGQPCEDIYEESRCGRPLGLAFDTQGNNLIIADAYYGLWQVDLGTNKKTLLVSPAQELAGKSINRPAKIFNGVTVSKEGDVYWTDSSSDFTIEDLVFASFANPSGRLFKYNRSKNVSEVLLDELAFANGLALSPNEDFIVVAETGAMRLTKYHLKGAKAGQSEVFVDGLPGLPDNLTPDAEGIWVPLVQSADSEHPNGFTLFTRFPSVRLFLARMLALFELPFRYLNSVYPNKFSQRFVHFVGHMESITVLAPKRTTVVRVDWNGNIVGSLHGFDKSAATVSHVLEFQDFLFLGSPTNQYLARVKSPKAKQPTLKVRNVRVEGEGLEASIGVPPSKATPKPKAAPSTTTPKPTTTTTTTTPKPTTKTTTTTTTPKPTTTTTTKKPTTTTTTTTTTPKPTTTKPPTAKPSTTTTTTTTPKPTTTTTPTTPTPEPSKPKVKRTVPEKPAPVEEDIPSDTQPPKKEKLKVINKQGVNVEL.

Over 1–6 (MGLLYA) the chain is Cytoplasmic. Residues 7–29 (LRVRIMNFMIFFLLIILMPGLPP) form a helical membrane-spanning segment. Residues 30–579 (RTTFPFKDYI…INKQGVNVEL (550 aa)) are Extracellular-facing. 2 N-linked (GlcNAc...) asparagine glycosylation sites follow: N213 and N217. Positions 427 to 579 (GLEASIGVPP…INKQGVNVEL (153 aa)) are disordered. Over residues 435–529 (PPSKATPKPK…PKPTTTTTPT (95 aa)) the composition is skewed to low complexity.

It belongs to the strictosidine synthase family. As to quaternary structure, interacts with sturkopf. In terms of processing, O-glycosylated. Glycosylated in the ovary of 4 day old females. Phosphorylated. Detected in ovaries (at protein level). In larvae, detected in the fat body, salivary glands, imaginal disks and gut (at protein level). In adults, expressed in the cardia, and in regions of the ventriculus including the area posterior to the cardia. In females also expressed in follicle cells.

Its subcellular location is the cell membrane. Transmembrane mucin that may be involved in cellular adhesion and the innate immune response. Membrane-tethered mucins are involved in many cell surface functions and form a physical barrier around cells to regulate cell-cell and/or cell-substrate interactions, and protect against pathogens or harmful extracellular conditions. This mucin likely acts in hemocyte adhesion as it is released from hemocytes during coagulation and is also able to bind lipophorin particles which form part of the hemocyte coagulogen. Able to induce expression of the antibacterial proteins in the presence of GalNAc-specific lectins and so probably also functions in the innate immune response. This chain is Adipocyte plasma membrane-associated protein Hemomucin, found in Drosophila melanogaster (Fruit fly).